A 212-amino-acid polypeptide reads, in one-letter code: Acyl-homoserine-lactone synthase (212 aa).

Belongs to the autoinducer synthase family.

The catalysed reaction is a fatty acyl-[ACP] + S-adenosyl-L-methionine = an N-acyl-L-homoserine lactone + S-methyl-5'-thioadenosine + holo-[ACP] + H(+). Required for the synthesis of OHHL (N-(3-oxohexanoyl)-L-homoserine lactone), an autoinducer molecule which binds to the EchR transcriptional regulator. This chain is Acyl-homoserine-lactone synthase (echI), found in Dickeya chrysanthemi (Pectobacterium chrysanthemi).